Reading from the N-terminus, the 538-residue chain is Mevalonate kinase erg12 (538 aa).

Residues 1-87 (MGNPRGRRTN…RNMSRKPSSP (87 aa)) are disordered. Residues 9–29 (TNGSIKTSKGTQRGTVSNLLS) show a composition bias toward polar residues. The span at 57-69 (TTPSTTESTLKTT) shows a compositional bias: low complexity. Residues K99, S231, and 236–242 (GAGLGSS) contribute to the ATP site. 2 residues coordinate Mg(2+): S242 and E287. Residue D298 is the Proton acceptor of the active site.

This sequence belongs to the GHMP kinase family. Mevalonate kinase subfamily. As to quaternary structure, homodimer. Requires Mg(2+) as cofactor.

It localises to the cytoplasm. It is found in the cytosol. The enzyme catalyses (R)-mevalonate + ATP = (R)-5-phosphomevalonate + ADP + H(+). It participates in isoprenoid biosynthesis; isopentenyl diphosphate biosynthesis via mevalonate pathway; isopentenyl diphosphate from (R)-mevalonate: step 1/3. Functionally, mevalonate kinase; part of the second module of ergosterol biosynthesis pathway that includes the middle steps of the pathway. Erg12 converts mevalonate into 5-phosphomevalonate. The second module is carried out in the vacuole and involves the formation of farnesyl diphosphate, which is also an important intermediate in the biosynthesis of ubiquinone, dolichol, heme and prenylated proteins. Activity by the mevalonate kinase erg12 (AFUA_4G07780) first converts mevalonate into 5-phosphomevalonate. 5-phosphomevalonate is then further converted to 5-diphosphomevalonate by the phosphomevalonate kinase erg8 (AFUA_5G10680). The diphosphomevalonate decarboxylase mvd1 (AFUA_4G07130) then produces isopentenyl diphosphate. The isopentenyl-diphosphate delta-isomerase idi1 (AFUA_6G11160) then catalyzes the 1,3-allylic rearrangement of the homoallylic substrate isopentenyl (IPP) to its highly electrophilic allylic isomer, dimethylallyl diphosphate (DMAPP). Finally the farnesyl diphosphate synthase erg20 (AFUA_5G02450) catalyzes the sequential condensation of isopentenyl pyrophosphate with dimethylallyl pyrophosphate, and then with the resultant geranylpyrophosphate to the ultimate product farnesyl pyrophosphate. This is Mevalonate kinase erg12 from Aspergillus fumigatus (strain ATCC MYA-4609 / CBS 101355 / FGSC A1100 / Af293) (Neosartorya fumigata).